The primary structure comprises 69 residues: U2-agatoxin-Ao1z (69 aa).

The first 20 residues, Met1–Ala20, serve as a signal peptide directing secretion. Positions Val21 to Arg34 are excised as a propeptide. Intrachain disulfides connect Cys37/Cys53, Cys44/Cys58, and Cys52/Cys68.

The protein belongs to the neurotoxin 01 (U2-agtx) family. As to expression, expressed by the venom gland.

The protein resides in the secreted. In terms of biological role, insect active toxin causing rapid but reversible paralysis in crickets. No activity shown in mammals. Does not show effect on mammalian voltage-gated calcium channels. This Agelena orientalis (Funnel-web spider) protein is U2-agatoxin-Ao1z.